The following is a 269-amino-acid chain: Phosphatidylglycerol--prolipoprotein diacylglyceryl transferase (269 aa).

The next 7 membrane-spanning stretches (helical) occupy residues 17-37, 59-79, 95-115, 123-143, 181-201, 206-226, and 242-262; these read IGPI…MLGW, FLVW…VLFY, WQGG…IIAF, LFQV…FGRI, AGLE…LTGI, GALS…SEFF, and MGQL…AWAL. Arginine 142 is a binding site for a 1,2-diacyl-sn-glycero-3-phospho-(1'-sn-glycerol).

It belongs to the Lgt family.

The protein localises to the cell inner membrane. It carries out the reaction L-cysteinyl-[prolipoprotein] + a 1,2-diacyl-sn-glycero-3-phospho-(1'-sn-glycerol) = an S-1,2-diacyl-sn-glyceryl-L-cysteinyl-[prolipoprotein] + sn-glycerol 1-phosphate + H(+). Its pathway is protein modification; lipoprotein biosynthesis (diacylglyceryl transfer). Catalyzes the transfer of the diacylglyceryl group from phosphatidylglycerol to the sulfhydryl group of the N-terminal cysteine of a prolipoprotein, the first step in the formation of mature lipoproteins. In Paramagnetospirillum magneticum (strain ATCC 700264 / AMB-1) (Magnetospirillum magneticum), this protein is Phosphatidylglycerol--prolipoprotein diacylglyceryl transferase.